Here is a 417-residue protein sequence, read N- to C-terminus: Gamma-glutamyl phosphate reductase (417 aa).

Belongs to the gamma-glutamyl phosphate reductase family.

It localises to the cytoplasm. It catalyses the reaction L-glutamate 5-semialdehyde + phosphate + NADP(+) = L-glutamyl 5-phosphate + NADPH + H(+). Its pathway is amino-acid biosynthesis; L-proline biosynthesis; L-glutamate 5-semialdehyde from L-glutamate: step 2/2. Catalyzes the NADPH-dependent reduction of L-glutamate 5-phosphate into L-glutamate 5-semialdehyde and phosphate. The product spontaneously undergoes cyclization to form 1-pyrroline-5-carboxylate. This is Gamma-glutamyl phosphate reductase from Erwinia tasmaniensis (strain DSM 17950 / CFBP 7177 / CIP 109463 / NCPPB 4357 / Et1/99).